A 283-amino-acid chain; its full sequence is NFU1 iron-sulfur cluster scaffold homolog, mitochondrial (283 aa).

The transit peptide at 1–65 (MSKFLSQAAI…ELRMPVACRR (65 aa)) directs the protein to the mitochondrion. Positions 182 to 250 (IKELLDTRIR…IPEVESVEQV (69 aa)) are nifU. Positions 219 and 222 each coordinate [4Fe-4S] cluster.

This sequence belongs to the NifU family.

The protein resides in the mitochondrion. In terms of biological role, molecular scaffold for [Fe-S] cluster assembly of mitochondrial iron-sulfur proteins. The protein is NFU1 iron-sulfur cluster scaffold homolog, mitochondrial of Drosophila simulans (Fruit fly).